The sequence spans 345 residues: N-acetyl-gamma-glutamyl-phosphate reductase (345 aa).

Residue Cys-149 is part of the active site.

It belongs to the NAGSA dehydrogenase family. Type 1 subfamily.

The protein resides in the cytoplasm. The catalysed reaction is N-acetyl-L-glutamate 5-semialdehyde + phosphate + NADP(+) = N-acetyl-L-glutamyl 5-phosphate + NADPH + H(+). It participates in amino-acid biosynthesis; L-arginine biosynthesis; N(2)-acetyl-L-ornithine from L-glutamate: step 3/4. Functionally, catalyzes the NADPH-dependent reduction of N-acetyl-5-glutamyl phosphate to yield N-acetyl-L-glutamate 5-semialdehyde. The chain is N-acetyl-gamma-glutamyl-phosphate reductase from Herminiimonas arsenicoxydans.